The following is a 247-amino-acid chain: Adenosylcobinamide-GDP ribazoletransferase (247 aa).

5 helical membrane-spanning segments follow: residues 34–54 (IITFPLIGLLLGAISGLVFMV), 59–79 (CGVPLAALFSVLVLALMTGGF), 113–133 (GGLALIFVVLAKILVLSELAL), 138–158 (ILASLAAACAVSRGTAALLMY), and 194–214 (VLLPGMHGVAAMVVTMVAIFI).

It belongs to the CobS family. It depends on Mg(2+) as a cofactor.

It localises to the cell inner membrane. The catalysed reaction is alpha-ribazole + adenosylcob(III)inamide-GDP = adenosylcob(III)alamin + GMP + H(+). The enzyme catalyses alpha-ribazole 5'-phosphate + adenosylcob(III)inamide-GDP = adenosylcob(III)alamin 5'-phosphate + GMP + H(+). The protein operates within cofactor biosynthesis; adenosylcobalamin biosynthesis; adenosylcobalamin from cob(II)yrinate a,c-diamide: step 7/7. Its function is as follows. Joins adenosylcobinamide-GDP and alpha-ribazole to generate adenosylcobalamin (Ado-cobalamin). Also synthesizes adenosylcobalamin 5'-phosphate from adenosylcobinamide-GDP and alpha-ribazole 5'-phosphate. In Escherichia coli (strain 55989 / EAEC), this protein is Adenosylcobinamide-GDP ribazoletransferase.